Reading from the N-terminus, the 243-residue chain is Uridylate kinase (243 aa).

Residue 12-15 (KLSG) coordinates ATP. Residues 20 to 25 (GPGGSG) are involved in allosteric activation by GTP. Glycine 56 lines the UMP pocket. 2 residues coordinate ATP: glycine 57 and arginine 61. UMP contacts are provided by residues aspartate 76 and 137–144 (TGSPYFST). ATP-binding residues include asparagine 165, tyrosine 171, and aspartate 174.

It belongs to the UMP kinase family. As to quaternary structure, homohexamer.

Its subcellular location is the cytoplasm. It catalyses the reaction UMP + ATP = UDP + ADP. It participates in pyrimidine metabolism; CTP biosynthesis via de novo pathway; UDP from UMP (UMPK route): step 1/1. Its activity is regulated as follows. Allosterically activated by GTP. Inhibited by UTP. Its function is as follows. Catalyzes the reversible phosphorylation of UMP to UDP. This Oenococcus oeni (strain ATCC BAA-331 / PSU-1) protein is Uridylate kinase.